A 776-amino-acid polypeptide reads, in one-letter code: Intermediate filament protein ifp-1 (776 aa).

The head stretch occupies residues 1–23 (MDSANARDCLLHLARAKLSERQD). The 352-residue stretch at 20–371 (ERQDLVQLND…ELLDRSGDPR (352 aa)) folds into the IF rod domain. The coil 1A stretch occupies residues 24-55 (LVQLNDQFVDIIEHVHYMEAEHTALEHDYNLL). The tract at residues 56–69 (KSGVQSDSSGINEI) is linker 1. Positions 70-207 (YNVEIRTVRS…EDNKKIIMNE (138 aa)) are coil 1B. Residues 208–224 (HKYFVRDRNADRHVFRD) form a linker 12 region. A coil 2 region spans residues 225-620 (QLRKAIADIR…QRGPHHSSYH (396 aa)). Disordered regions lie at residues 453-473 (ASPIRPSYTPYQQESRADSRS) and 518-544 (NTTQINNPYASRTPTSSVNDRIASERR). The span at 518–536 (NTTQINNPYASRTPTSSVN) shows a compositional bias: polar residues. The interval 621 to 768 (AATGSVSNSI…WFVYTSNTEI (148 aa)) is tail. Residues 653–764 (NFQRFTRWYK…EVKSWFVYTS (112 aa)) form the LTD domain.

The protein belongs to the intermediate filament family.

It is found in the cytoplasm. Cytoplasmic intermediate filaments provide mechanical strength to cells. Not essential protein. The polypeptide is Intermediate filament protein ifp-1 (ifp-1) (Caenorhabditis elegans).